Consider the following 120-residue polypeptide: Large ribosomal subunit protein bL20 (120 aa).

The protein belongs to the bacterial ribosomal protein bL20 family.

Functionally, binds directly to 23S ribosomal RNA and is necessary for the in vitro assembly process of the 50S ribosomal subunit. It is not involved in the protein synthesizing functions of that subunit. This chain is Large ribosomal subunit protein bL20, found in Chlamydia abortus (strain DSM 27085 / S26/3) (Chlamydophila abortus).